The chain runs to 322 residues: ATP-dependent 6-phosphofructokinase (322 aa).

Residues glycine 12, arginine 73 to phenylalanine 74, and glycine 103 to threonine 106 each bind ATP. Aspartate 104 provides a ligand contact to Mg(2+). Substrate is bound at residue threonine 126 to aspartate 128. Aspartate 128 serves as the catalytic Proton acceptor. Arginine 155 is an ADP binding site. Substrate contacts are provided by residues arginine 163 and methionine 170 to arginine 172. ADP-binding positions include glycine 186 to glutamate 188, lysine 212, and lysine 214 to serine 216. Substrate is bound by residues glutamate 223, arginine 245, and histidine 251 to arginine 254.

It belongs to the phosphofructokinase type A (PFKA) family. ATP-dependent PFK group I subfamily. Prokaryotic clade 'B1' sub-subfamily. In terms of assembly, homotetramer. Mg(2+) is required as a cofactor.

It localises to the cytoplasm. It carries out the reaction beta-D-fructose 6-phosphate + ATP = beta-D-fructose 1,6-bisphosphate + ADP + H(+). Its pathway is carbohydrate degradation; glycolysis; D-glyceraldehyde 3-phosphate and glycerone phosphate from D-glucose: step 3/4. Allosterically activated by ADP and other diphosphonucleosides, and allosterically inhibited by phosphoenolpyruvate. Catalyzes the phosphorylation of D-fructose 6-phosphate to fructose 1,6-bisphosphate by ATP, the first committing step of glycolysis. The chain is ATP-dependent 6-phosphofructokinase from Mesomycoplasma hyopneumoniae (strain 7448) (Mycoplasma hyopneumoniae).